Reading from the N-terminus, the 115-residue chain is MAGMVLGVGAGVFLLALIWVLVLLLCVLLSRASGIARFSIVFVFLGALIITTVLLLFPRASEFPAPEGEMKIVDAFFIGRYVLLAFLSAVFLGGLFLLLTHHLLEPIYAKPLRSC.

3 helical membrane-spanning segments follow: residues 5 to 25 (VLGVGAGVFLLALIWVLVLLL), 38 to 58 (FSIVFVFLGALIITTVLLLFP), and 81 to 101 (YVLLAFLSAVFLGGLFLLLTH).

This sequence belongs to the TMEM218 family. As to quaternary structure, interacts with TMEM67.

It is found in the membrane. The protein resides in the cell projection. The protein localises to the cilium. May be involved in ciliary biogenesis or function. In Mus musculus (Mouse), this protein is Transmembrane protein 218 (Tmem218).